The chain runs to 25 residues: Omega-conotoxin CVIB (25 aa).

3 disulfides stabilise this stretch: Cys-1/Cys-16, Cys-8/Cys-20, and Cys-15/Cys-25. Residue Cys-25 is modified to Cysteine amide.

The protein belongs to the conotoxin O1 superfamily. In terms of tissue distribution, expressed by the venom duct.

It localises to the secreted. Its function is as follows. Omega-conotoxins act at presynaptic membranes, they bind and block voltage-gated calcium channels (Cav). This toxin blocks N-, P- and Q-type calcium channels. It shows high activities on Cav2.1/CACNA1A (IC(50)=11 nM) and Cav2.2/CACNA1B (IC(50)=7.7 nM). In addition, it shows a higher potency when Cav2.2/CACNA1B is only expressed with the ancillary subunit CACNB3 (IC(50)=1.6 nM) than on Cav2.2/CACNA1B expressed with the ancillary subunits CACNA2D1 and CACNB3 (IC(50)=12 nM). Both the Cav2.2/CACNA1B block by this toxin and the recovery are voltage-independent. It is noteworthy that ancillary subunits beta do not modulate recovery from this toxin block, since Cav2.2/CACNA1B expressed with either the ancillary subunit CACNB2a (isoform 2a) or with CACNB3 exhibits moderate recovery. This Conus catus (Cat cone) protein is Omega-conotoxin CVIB.